The sequence spans 315 residues: Calumenin (315 aa).

The first 19 residues, 1-19 (MDLRQFLMCLSLCTAFALS), serve as a signal peptide directing secretion. Y47 carries the post-translational modification Phosphotyrosine. T65 bears the Phosphothreonine mark. EF-hand domains follow at residues 68-103 (ESKE…AQKK), 104-139 (YIYD…TYLD), 151-186 (PIMV…EEYD), 188-223 (MKDI…HDGN), 229-264 (WVKT…SDYD), and 265-300 (HAEA…FVGS). S69 carries the phosphoserine modification. Positions 81, 83, 85, 92, 117, 119, 121, and 128 each coordinate Ca(2+). N-linked (GlcNAc...) asparagine glycosylation is present at N131. D164, D166, D168, E175, D201, N203, D205, E212, D242, N244, D246, K248, and E253 together coordinate Ca(2+). T254 carries the post-translational modification Phosphothreonine. 2 positions are modified to phosphoserine: S261 and S277. D278, D280, D282, K284, and E289 together coordinate Ca(2+). The Prevents secretion from ER motif lies at 312-315 (HDEF).

It belongs to the CREC family. In terms of assembly, binds crotoxin. Interacts with GGCX.

It localises to the endoplasmic reticulum membrane. It is found in the golgi apparatus. Its subcellular location is the secreted. The protein localises to the melanosome. The protein resides in the sarcoplasmic reticulum lumen. Its function is as follows. Involved in regulation of vitamin K-dependent carboxylation of multiple N-terminal glutamate residues. Seems to inhibit gamma-carboxylase GGCX. Binds 7 calcium ions with a low affinity. This is Calumenin (Calu) from Rattus norvegicus (Rat).